The following is a 120-amino-acid chain: Large ribosomal subunit protein uL14 (120 aa).

The protein belongs to the universal ribosomal protein uL14 family. In terms of assembly, part of the 50S ribosomal subunit. Forms a cluster with proteins L3 and L19. In the 70S ribosome, L14 and L19 interact and together make contacts with the 16S rRNA in bridges B5 and B8.

Functionally, binds to 23S rRNA. Forms part of two intersubunit bridges in the 70S ribosome. The chain is Large ribosomal subunit protein uL14 from Aster yellows witches'-broom phytoplasma (strain AYWB).